A 166-amino-acid chain; its full sequence is MPRSQKNDNFIDKTFTVVADILLKVLPTSIDEKRAFTYYRNGMSAQSEGEYAEALQNYYQALRYEIDAYDRSYMLYNIGLIHSSNGQQSKALEYYYQALDRNPRLSQALNNIATIYHYRGEQALINNQDEISKIFFDKAADYWKEAIRLSPTSYTKAKNWLSVRNK.

3 TPR repeats span residues 35–68, 72–105, and 120–153; these read AFTYYRNGMSAQSEGEYAEALQNYYQALRYEIDA, SYMLYNIGLIHSSNGQQSKALEYYYQALDRNPRL, and GEQALINNQDEISKIFFDKAADYWKEAIRLSPTS.

It belongs to the Ycf3 family.

It localises to the plastid. The protein localises to the chloroplast thylakoid membrane. Essential for the assembly of the photosystem I (PSI) complex. May act as a chaperone-like factor to guide the assembly of the PSI subunits. The polypeptide is Photosystem I assembly protein Ycf3 (Bigelowiella natans (Pedinomonas minutissima)).